The chain runs to 716 residues: tRNA(Met) cytidine acetyltransferase TmcA (716 aa).

ATP contacts are provided by residues Gln192, 217–226 (GRGKSYVIGL), and Arg364. Positions 401 to 567 (REVLARDREV…KNVALAKPLD (167 aa)) constitute an N-acetyltransferase domain. Acetyl-CoA contacts are provided by residues 493-495 (IAV) and 500-506 (QRRGLGS).

The protein belongs to the RNA cytidine acetyltransferase family. TmcA subfamily.

It localises to the cytoplasm. It catalyses the reaction cytidine(34) in elongator tRNA(Met) + acetyl-CoA + ATP + H2O = N(4)-acetylcytidine(34) in elongator tRNA(Met) + ADP + phosphate + CoA + H(+). In terms of biological role, catalyzes the formation of N(4)-acetylcytidine (ac(4)C) at the wobble position of tRNA(Met), by using acetyl-CoA as an acetyl donor and ATP (or GTP). The protein is tRNA(Met) cytidine acetyltransferase TmcA of Aeropyrum pernix (strain ATCC 700893 / DSM 11879 / JCM 9820 / NBRC 100138 / K1).